Consider the following 235-residue polypeptide: MQQHLKYKIMTNIKHLAIIMDGNARWADQHNLTKSEGHKAGADKIRELLPEFLNLNIPYITLYTFSSENWQRSSTEVDFLIKLLSIYLKTELNNLHKNGVKIKVIGRLTLLSSSLQKQINNAIELTKNNNKITLCIAFSYGSRQEIVDACTKIITSGKKAVSDSDIQHALYDPEMPDVDLLIRPGGVYRISNFLLWQAAYAELYFSPKYWPDFNKYDIQEAINDYSKRKRTFGKR.

D21 is an active-site residue. D21 is a Mg(2+) binding site. Residues 22–25, W26, K34, H38, and 66–68 each bind substrate; these read GNAR and SSE. The Proton acceptor role is filled by N69. Residues W70, R72, R183, and 189–191 contribute to the substrate site; that span reads RIS. Residue E202 coordinates Mg(2+).

Belongs to the UPP synthase family. Homodimer. Mg(2+) is required as a cofactor.

Functionally, catalyzes the condensation of isopentenyl diphosphate (IPP) with allylic pyrophosphates generating different type of terpenoids. In Rickettsia conorii (strain ATCC VR-613 / Malish 7), this protein is Isoprenyl transferase.